Consider the following 141-residue polypeptide: NADH dehydrogenase [ubiquinone] 1 alpha subcomplex subunit 11 (141 aa).

At Ala2 the chain carries N-acetylalanine. 2 helical membrane passes run Lys21–Leu43 and Gln58–Val80.

This sequence belongs to the complex I NDUFA11 subunit family. In terms of assembly, complex I is composed of 45 different subunits.

It localises to the mitochondrion inner membrane. Accessory subunit of the mitochondrial membrane respiratory chain NADH dehydrogenase (Complex I), that is believed not to be involved in catalysis. Complex I functions in the transfer of electrons from NADH to the respiratory chain. The immediate electron acceptor for the enzyme is believed to be ubiquinone. The polypeptide is NADH dehydrogenase [ubiquinone] 1 alpha subcomplex subunit 11 (NDUFA11) (Homo sapiens (Human)).